We begin with the raw amino-acid sequence, 143 residues long: Large ribosomal subunit protein uL11 (143 aa).

It belongs to the universal ribosomal protein uL11 family. As to quaternary structure, part of the ribosomal stalk of the 50S ribosomal subunit. Interacts with L10 and the large rRNA to form the base of the stalk. L10 forms an elongated spine to which L12 dimers bind in a sequential fashion forming a multimeric L10(L12)X complex. One or more lysine residues are methylated.

In terms of biological role, forms part of the ribosomal stalk which helps the ribosome interact with GTP-bound translation factors. The polypeptide is Large ribosomal subunit protein uL11 (Paraburkholderia phymatum (strain DSM 17167 / CIP 108236 / LMG 21445 / STM815) (Burkholderia phymatum)).